The sequence spans 493 residues: Cytochrome P450 monooxygenase mfmF (493 aa).

Helical transmembrane passes span 3–23 (SLIP…RLFF) and 301–321 (VLFA…FHLV). Position 440 (C440) interacts with heme.

It belongs to the cytochrome P450 family. It depends on heme as a cofactor.

The protein resides in the membrane. It functions in the pathway secondary metabolite biosynthesis; terpenoid biosynthesis. Its function is as follows. Cytochrome P450 monooxygenase; part of the gene cluster that mediates the biosynthesis of the phthalide-terpenoid hybrid 11'-O-desmethylfendlerol. Within the pathway, mfmF catalyzes C-3 hydroxylation of 5-hydroxy-4-(hydroxymethyl)-7-methoxy-6-methylphthalide to yield cyclopolic acid. The biosynthesis of 11'-O-desmethylfendlerol begins with the NR-PKS mfmB that forms 3,5-dimethylorsellinic acid (DMOA), which is then transformed into the phthalide 5,7-dihydroxy-4-(hydroxymethyl)-6-methylphthalide by the cytochrome P450 monooxygenase mfmA and the hydrolase mfmC. Subsequently, the methyltransferase mfmE catalyzes 7-O-methylation to yield 5-hydroxy-4-(hydroxymethyl)-7-methoxy-6-methylphthalide, which undergoes C-3 hydroxylation by the cytochrome P450 monooxygenase mfmF. The resultant cyclopolic acid (2,5-dihydroxy-4-(hydroxymethyl)-7-methoxy-6-methylphthalide) is then farnesylated by the DMATS-type prenyltransferase mfmD to afford 5-O-farnesylcyclopolic acid. Finally, the Pyr4-family terpene cyclase mfmH cyclizes the farnesyl moiety of 5-O-farnesylcyclopolic acid into a drimane-like structure, thus completing the biosynthesis of 11'-O-desmethylfendlerol. This Annulohypoxylon moriforme (Filamentous fungus) protein is Cytochrome P450 monooxygenase mfmF.